A 349-amino-acid chain; its full sequence is Transcription factor HBP-1a (349 aa).

Residues 1–11 show a composition bias toward polar residues; it reads MGSNDPSTPSK. 4 disordered regions span residues 1-39, 101-196, 224-277, and 312-349; these read MGSNDPSTPSKASKPPEQEQPPATTSGTTAPVYPEWPGF, FHYP…NKPM, GATG…QAEC, and NTSLKAKLGESGGGGGSDAVPDMNERGDTNGGSHQKEP. The segment covering 113 to 124 has biased composition (low complexity); that stretch reads PAGAQGAAPGAA. Positions 174-191 are enriched in polar residues; it reads NENGSAQNGVSHSSSHGT. Residues 252–315 enclose the bZIP domain; it reads ELKKQKRKLS…EELLSKNTSL (64 aa). A basic motif region spans residues 254–273; the sequence is KKQKRKLSNRESARRSRLRK. Residues 261 to 277 are compositionally biased toward basic and acidic residues; the sequence is SNRESARRSRLRKQAEC. The segment at 280-315 is leucine-zipper; the sequence is LGQRAEALKSENSSLRIELDRIKKEYEELLSKNTSL. The segment covering 334-349 has biased composition (basic and acidic residues); it reads MNERGDTNGGSHQKEP.

It belongs to the bZIP family. As to quaternary structure, binds DNA as a dimer.

The protein resides in the nucleus. Its function is as follows. Binds to the hexamer motif 5'-ACGTCA-3' of histone gene promoters. This chain is Transcription factor HBP-1a, found in Triticum aestivum (Wheat).